Consider the following 340-residue polypeptide: N-acetyl-gamma-glutamyl-phosphate reductase (340 aa).

The active site involves C146.

Belongs to the NAGSA dehydrogenase family. Type 1 subfamily.

It is found in the cytoplasm. The enzyme catalyses N-acetyl-L-glutamate 5-semialdehyde + phosphate + NADP(+) = N-acetyl-L-glutamyl 5-phosphate + NADPH + H(+). It participates in amino-acid biosynthesis; L-arginine biosynthesis; N(2)-acetyl-L-ornithine from L-glutamate: step 3/4. Functionally, catalyzes the NADPH-dependent reduction of N-acetyl-5-glutamyl phosphate to yield N-acetyl-L-glutamate 5-semialdehyde. This is N-acetyl-gamma-glutamyl-phosphate reductase from Streptococcus mutans serotype c (strain ATCC 700610 / UA159).